The following is a 510-amino-acid chain: Lysine--tRNA ligase (510 aa).

Mg(2+) is bound by residues glutamate 420 and glutamate 427.

This sequence belongs to the class-II aminoacyl-tRNA synthetase family. In terms of assembly, homodimer. Requires Mg(2+) as cofactor.

The protein localises to the cytoplasm. It carries out the reaction tRNA(Lys) + L-lysine + ATP = L-lysyl-tRNA(Lys) + AMP + diphosphate. This Vibrio campbellii (strain ATCC BAA-1116) protein is Lysine--tRNA ligase.